The following is a 394-amino-acid chain: Phosphoglycerate kinase (394 aa).

Substrate-binding positions include 21–23 (DFN), arginine 36, 59–62 (HLGR), arginine 118, and arginine 151. Serine 183 carries the phosphoserine modification. Residues lysine 201 and glycine 292 each coordinate ATP. Phosphothreonine is present on threonine 299. ATP is bound by residues glutamate 323 and 350 to 353 (GGDS).

The protein belongs to the phosphoglycerate kinase family. As to quaternary structure, monomer.

The protein localises to the cytoplasm. The catalysed reaction is (2R)-3-phosphoglycerate + ATP = (2R)-3-phospho-glyceroyl phosphate + ADP. It participates in carbohydrate degradation; glycolysis; pyruvate from D-glyceraldehyde 3-phosphate: step 2/5. In Bacillus thuringiensis subsp. konkukian (strain 97-27), this protein is Phosphoglycerate kinase.